The primary structure comprises 279 residues: 4-hydroxy-3-methylbut-2-enyl diphosphate reductase (279 aa).

A [4Fe-4S] cluster-binding site is contributed by Cys-12. His-42 and His-74 together coordinate (2E)-4-hydroxy-3-methylbut-2-enyl diphosphate. Residues His-42 and His-74 each coordinate dimethylallyl diphosphate. 2 residues coordinate isopentenyl diphosphate: His-42 and His-74. Cys-96 serves as a coordination point for [4Fe-4S] cluster. His-124 serves as a coordination point for (2E)-4-hydroxy-3-methylbut-2-enyl diphosphate. His-124 serves as a coordination point for dimethylallyl diphosphate. His-124 is an isopentenyl diphosphate binding site. Catalysis depends on Glu-126, which acts as the Proton donor. Residue Thr-162 participates in (2E)-4-hydroxy-3-methylbut-2-enyl diphosphate binding. Position 190 (Cys-190) interacts with [4Fe-4S] cluster. Ser-218, Ser-219, Asn-220, and Ser-263 together coordinate (2E)-4-hydroxy-3-methylbut-2-enyl diphosphate. Residues Ser-218, Ser-219, Asn-220, and Ser-263 each contribute to the dimethylallyl diphosphate site. Residues Ser-218, Ser-219, Asn-220, and Ser-263 each coordinate isopentenyl diphosphate.

It belongs to the IspH family. It depends on [4Fe-4S] cluster as a cofactor.

The enzyme catalyses isopentenyl diphosphate + 2 oxidized [2Fe-2S]-[ferredoxin] + H2O = (2E)-4-hydroxy-3-methylbut-2-enyl diphosphate + 2 reduced [2Fe-2S]-[ferredoxin] + 2 H(+). It catalyses the reaction dimethylallyl diphosphate + 2 oxidized [2Fe-2S]-[ferredoxin] + H2O = (2E)-4-hydroxy-3-methylbut-2-enyl diphosphate + 2 reduced [2Fe-2S]-[ferredoxin] + 2 H(+). The protein operates within isoprenoid biosynthesis; dimethylallyl diphosphate biosynthesis; dimethylallyl diphosphate from (2E)-4-hydroxy-3-methylbutenyl diphosphate: step 1/1. Its pathway is isoprenoid biosynthesis; isopentenyl diphosphate biosynthesis via DXP pathway; isopentenyl diphosphate from 1-deoxy-D-xylulose 5-phosphate: step 6/6. Functionally, catalyzes the conversion of 1-hydroxy-2-methyl-2-(E)-butenyl 4-diphosphate (HMBPP) into a mixture of isopentenyl diphosphate (IPP) and dimethylallyl diphosphate (DMAPP). Acts in the terminal step of the DOXP/MEP pathway for isoprenoid precursor biosynthesis. The polypeptide is 4-hydroxy-3-methylbut-2-enyl diphosphate reductase (Alkaliphilus oremlandii (strain OhILAs) (Clostridium oremlandii (strain OhILAs))).